Here is a 98-residue protein sequence, read N- to C-terminus: ATP-dependent Clp protease adapter protein ClpS (98 aa).

This sequence belongs to the ClpS family. Binds to the N-terminal domain of the chaperone ClpA.

Its function is as follows. Involved in the modulation of the specificity of the ClpAP-mediated ATP-dependent protein degradation. The protein is ATP-dependent Clp protease adapter protein ClpS of Synechocystis sp. (strain ATCC 27184 / PCC 6803 / Kazusa).